The primary structure comprises 358 residues: Src kinase-associated phosphoprotein 2 (358 aa).

A phosphoserine mark is found at S5 and S9. The homodimerization stretch occupies residues 14 to 64 (PEEIRNLLADVETFVADTLKGENLSKKAKEKRESLIKKIKDVKSVYLQEFQ). Position 75 is a phosphotyrosine (Y75). Phosphoserine is present on residues S87 and S90. A PH domain is found at 116-219 (FVIKAGYLEK…WVQQLKFILQ (104 aa)). 2 positions are modified to phosphotyrosine: Y151 and Y197. S223 carries the post-translational modification Phosphoserine. The tract at residues 232 to 292 (ERGELYDDVD…RDSVHHTSGD (61 aa)) is disordered. Acidic residues predominate over residues 255 to 270 (IDDEIYEELPEEEEDT). Y260 is modified (phosphotyrosine; by FYN). Residues S272, S282, and S285 each carry the phosphoserine modification. A compositionally biased stretch (basic and acidic residues) spans 274-292 (KMDEQGKGSRDSVHHTSGD). An SH3 domain is found at 296–357 (DYANFYQGLW…PKAYLMEMYD (62 aa)).

It belongs to the SKAP family. In terms of assembly, interacts with LAT, GRB2, PTK2B and PRAM1. Homodimer. Interacts with FYB1, which is required for SKAP2 protein stability. Interacts with PTPNS1. Part of a complex consisting of SKAP2, FYB1 and PTPNS1. Part of a complex consisting of SKAP2, FYB1 and PIRB. May interact with actin. May interact with FYN, HCK and LYN. Interacts with FASLG. Dephosphorylated on Tyr-75 by PTPN22. Phosphorylated by FYN on Tyr-260. In case of infection with Y.pseudotuberculosis, dephosphorylated by bacterial phosphatase yopH. As to expression, expressed in kidney, lung, liver, spleen, bone marrow and testis. Present in T-cells, B-cells, and all cells of the myelomonocytic lineage. Present in all brain regions, with highest levels in neurons from the Purkinje cell layer, hippocampal gyrus, cortex and substantia nigra (at protein level).

The protein resides in the cytoplasm. Functionally, may be involved in B-cell and macrophage adhesion processes. In B-cells, may act by coupling the B-cell receptor (BCR) to integrin activation. May play a role in src signaling pathway. The sequence is that of Src kinase-associated phosphoprotein 2 (Skap2) from Mus musculus (Mouse).